Consider the following 155-residue polypeptide: MFLISGISSILAIGLLSPVQSIVCLIVLFVSAAISLYSNGFVLMGILYVLIYVGAIAILFLFILSLLNIEYNYKGTIHPLIFTILIICLIPLDLSYETYGIVENVNIAYPFNSLLDWDLELTTVGSLLYTEYAIPMILIGLILILSVIGAIAITK.

Helical transmembrane passes span 10-30, 43-63, 75-95, and 133-153; these read ILAIGLLSPVQSIVCLIVLFV, LMGILYVLIYVGAIAILFLFI, GTIHPLIFTILIICLIPLDLS, and AIPMILIGLILILSVIGAIAI.

The protein belongs to the complex I subunit 6 family.

Its subcellular location is the mitochondrion membrane. The enzyme catalyses a ubiquinone + NADH + 5 H(+)(in) = a ubiquinol + NAD(+) + 4 H(+)(out). Core subunit of the mitochondrial membrane respiratory chain NADH dehydrogenase (Complex I) that is believed to belong to the minimal assembly required for catalysis. Complex I functions in the transfer of electrons from NADH to the respiratory chain. The immediate electron acceptor for the enzyme is believed to be ubiquinone. In Candida parapsilosis (Yeast), this protein is NADH-ubiquinone oxidoreductase chain 6 (ND6).